The sequence spans 214 residues: Adenylate kinase (214 aa).

10–15 (GAGKGT) is a binding site for ATP. The NMP stretch occupies residues 30–59 (STGDMLRSAVKAGTELGLKAKALMDHGKLV). AMP is bound by residues Thr-31, Arg-36, 57–59 (KLV), 85–88 (GFPR), and Gln-92. Residues 122 to 159 (GRRIHAPSGRVYHIKFNPPVVENKDDVTGEELTVRKDD) form an LID region. Residues Arg-123 and 132–133 (VY) contribute to the ATP site. 2 residues coordinate AMP: Arg-156 and Arg-167. Residue Arg-200 participates in ATP binding.

It belongs to the adenylate kinase family. As to quaternary structure, monomer.

It is found in the cytoplasm. It catalyses the reaction AMP + ATP = 2 ADP. It functions in the pathway purine metabolism; AMP biosynthesis via salvage pathway; AMP from ADP: step 1/1. In terms of biological role, catalyzes the reversible transfer of the terminal phosphate group between ATP and AMP. Plays an important role in cellular energy homeostasis and in adenine nucleotide metabolism. The sequence is that of Adenylate kinase from Photorhabdus laumondii subsp. laumondii (strain DSM 15139 / CIP 105565 / TT01) (Photorhabdus luminescens subsp. laumondii).